The sequence spans 270 residues: Regulatory protein RecX (270 aa).

It belongs to the RecX family.

The protein localises to the cytoplasm. Functionally, modulates RecA activity. This chain is Regulatory protein RecX, found in Bacillus cereus (strain AH187).